The following is a 428-amino-acid chain: Elongation factor 1-alpha (428 aa).

The region spanning 5–217 (KPHVNIVFIG…DQIPEPEKPI (213 aa)) is the tr-type G domain. The segment at 14–21 (GHVDHGKS) is G1. GTP is bound at residue 14–21 (GHVDHGKS). Mg(2+) is bound at residue S21. The G2 stretch occupies residues 68-72 (GITID). The tract at residues 89 to 92 (DAPG) is G3. Residues 89-93 (DAPGH) and 144-147 (NKMD) contribute to the GTP site. Residues 144 to 147 (NKMD) are G4. Residues 181–183 (SAW) form a G5 region.

The protein belongs to the TRAFAC class translation factor GTPase superfamily. Classic translation factor GTPase family. EF-Tu/EF-1A subfamily.

It is found in the cytoplasm. The enzyme catalyses GTP + H2O = GDP + phosphate + H(+). In terms of biological role, GTP hydrolase that promotes the GTP-dependent binding of aminoacyl-tRNA to the A-site of ribosomes during protein biosynthesis. This is Elongation factor 1-alpha from Pyrococcus horikoshii (strain ATCC 700860 / DSM 12428 / JCM 9974 / NBRC 100139 / OT-3).